Reading from the N-terminus, the 71-residue chain is Delta-actitoxin-Avd2b 4 (71 aa).

The first 20 residues, 1-20, serve as a signal peptide directing secretion; the sequence is MMNRLLVFLMLGAFMLVVSA. Positions 21-41 are excised as a propeptide; that stretch reads NDAYGDEPAFKDLNQGDESLG. 3 cysteine pairs are disulfide-bonded: Cys-46–Cys-61, Cys-47–Cys-55, and Cys-49–Cys-66.

This sequence belongs to the sea anemone short toxin (type III) family.

It localises to the secreted. The protein resides in the nematocyst. In terms of biological role, voltage-gated sodium channel (Nav) inhibitor. 1 uM completely inhibits insect voltage-gated sodium channel inactivation (DmNav1 from D.melanogaster). The protein is Delta-actitoxin-Avd2b 4 of Anemonia viridis (Snakelocks anemone).